A 533-amino-acid chain; its full sequence is Methyl-accepting chemotaxis protein IV (533 aa).

At 1–6 the chain is on the cytoplasmic side; the sequence is MFNRIR. A helical membrane pass occupies residues 7 to 33; the sequence is ISTTLFLILILCGILQIGSNGMSFWAF. Residues 34–188 lie on the Periplasmic side of the membrane; sequence RDDLQRLNQV…AQSQRNYQIS (155 aa). Residues 189–209 traverse the membrane as a helical segment; that stretch reads ALVFISMIIVAAIYISSALWW. The Cytoplasmic segment spans residues 210–533; the sequence is TRKMIVQPLA…VQLQIAPVVS (324 aa). One can recognise an HAMP domain in the interval 212 to 264; sequence KMIVQPLAIIGSHFDSIAAGNLARPIAVYGRNEITAIFASLKTMQQALRGTVS. Residues 269 to 498 enclose the Methyl-accepting transducer domain; that stretch reads GSQEMHIGIA…EAAVATEQLA (230 aa). Residues Gln293, Gln300, and Gln307 each carry the glutamate methyl ester (Gln) modification. Glu489 carries the post-translational modification Glutamate methyl ester (Glu).

This sequence belongs to the methyl-accepting chemotaxis (MCP) protein family.

It is found in the cell inner membrane. Functionally, mediates taxis toward dipeptides via an interaction with the periplasmic dipeptide-binding protein. In terms of biological role, chemotactic-signal transducers respond to changes in the concentration of attractants and repellents in the environment, transduce a signal from the outside to the inside of the cell, and facilitate sensory adaptation through the variation of the level of methylation. Attractants increase the level of methylation while repellents decrease the level of methylation, the methyl groups are added by the methyltransferase CheR and removed by the methylesterase CheB. In Escherichia coli (strain K12), this protein is Methyl-accepting chemotaxis protein IV (tap).